Here is an 88-residue protein sequence, read N- to C-terminus: Elongation factor 1-beta (88 aa).

It belongs to the EF-1-beta/EF-1-delta family.

Functionally, promotes the exchange of GDP for GTP in EF-1-alpha/GDP, thus allowing the regeneration of EF-1-alpha/GTP that could then be used to form the ternary complex EF-1-alpha/GTP/AAtRNA. In Thermoplasma acidophilum (strain ATCC 25905 / DSM 1728 / JCM 9062 / NBRC 15155 / AMRC-C165), this protein is Elongation factor 1-beta (ef1b).